The primary structure comprises 214 residues: Pyrrolidone-carboxylate peptidase (214 aa).

Residues E78, C141, and H165 contribute to the active site.

Belongs to the peptidase C15 family. As to quaternary structure, homotetramer.

It is found in the cytoplasm. It carries out the reaction Release of an N-terminal pyroglutamyl group from a polypeptide, the second amino acid generally not being Pro.. In terms of biological role, removes 5-oxoproline from various penultimate amino acid residues except L-proline. This Streptococcus pneumoniae serotype 2 (strain D39 / NCTC 7466) protein is Pyrrolidone-carboxylate peptidase.